The chain runs to 255 residues: Tumor necrosis factor receptor superfamily member 9 (255 aa).

The N-terminal stretch at 1–23 (MGNSCYNIVATLLLVLNFERTRS) is a signal peptide. 4 TNFR-Cys repeats span residues 24–45 (LQDP…NQIC), 47–86 (PCPP…NAEC), 87–118 (DCTP…KGCK), and 119–159 (DCCF…VVCG). The Extracellular portion of the chain corresponds to 24-186 (LQDPCSNCPA…PAREPGHSPQ (163 aa)). Disulfide bonds link Cys-28–Cys-37, Cys-31–Cys-45, Cys-48–Cys-62, Cys-65–Cys-78, Cys-68–Cys-86, Cys-88–Cys-94, Cys-99–Cys-106, Cys-102–Cys-117, and Cys-121–Cys-133. N-linked (GlcNAc...) asparagine glycans are attached at residues Asn-138 and Asn-149. Cys-139 and Cys-158 are disulfide-bonded. The segment at 161–180 (SPADLSPGASSVTPPAPARE) is disordered. A helical membrane pass occupies residues 187–213 (IISFFLALTSTALLFLLFFLTLRFSVV). Over 214–255 (KRGRKKLLYIFKQPFMRPVQTTQEEDGCSCRFPEEEEGGCEL) the chain is Cytoplasmic. Residues 214-255 (KRGRKKLLYIFKQPFMRPVQTTQEEDGCSCRFPEEEEGGCEL) form an interaction with LRR-1 region.

As to quaternary structure, predominantly homodimeric, but may also exist as a monomer. Interacts with TRAF1, TRAF2 and TRAF3. Interacts with LRR-repeat protein 1/LRR-1. Expressed on the surface of activated T-cells.

It localises to the cell membrane. Its function is as follows. Receptor for TNFSF9/4-1BBL. Conveys a signal that enhances CD8(+) T-cell survival, cytotoxicity, and mitochondrial activity, thereby promoting immunity against viruses and tumors. This chain is Tumor necrosis factor receptor superfamily member 9 (TNFRSF9), found in Homo sapiens (Human).